A 194-amino-acid polypeptide reads, in one-letter code: 7-methyl-GTP pyrophosphatase (194 aa).

Asp-71 (proton acceptor) is an active-site residue.

This sequence belongs to the Maf family. YceF subfamily. The cofactor is a divalent metal cation.

The protein resides in the cytoplasm. The enzyme catalyses N(7)-methyl-GTP + H2O = N(7)-methyl-GMP + diphosphate + H(+). Functionally, nucleoside triphosphate pyrophosphatase that hydrolyzes 7-methyl-GTP (m(7)GTP). May have a dual role in cell division arrest and in preventing the incorporation of modified nucleotides into cellular nucleic acids. The polypeptide is 7-methyl-GTP pyrophosphatase (Aromatoleum aromaticum (strain DSM 19018 / LMG 30748 / EbN1) (Azoarcus sp. (strain EbN1))).